Consider the following 431-residue polypeptide: Ammonium transporter 3 (431 aa).

The Extracellular portion of the chain corresponds to Met-1–Ser-27. The helical transmembrane segment at Trp-28–Ala-48 threads the bilayer. At Gly-49–Asn-63 the chain is on the cytoplasmic side. The chain crosses the membrane as a helical span at residues Leu-64–Gly-84. Over Lys-85–Tyr-102 the chain is Extracellular. The helical transmembrane segment at Thr-103 to Ala-125 threads the bilayer. Topologically, residues Met-126–Cys-134 are cytoplasmic. The chain crosses the membrane as a helical span at residues Tyr-135 to Trp-155. Over Ser-156–Trp-160 the chain is Extracellular. Residues Leu-161–Ile-181 traverse the membrane as a helical segment. The Cytoplasmic segment spans residues Thr-182–Ser-211. The helical transmembrane segment at Val-212–Gly-232 threads the bilayer. At Ala-233–Ser-249 the chain is on the extracellular side. Residues Val-250–Phe-270 traverse the membrane as a helical segment. The Cytoplasmic portion of the chain corresponds to Asn-271–Trp-300. Residues Ala-301–Leu-321 form a helical membrane-spanning segment. The Extracellular segment spans residues Asn-322–Thr-333. The helical transmembrane segment at Ala-334 to Gly-354 threads the bilayer. Residues Arg-355–Arg-357 lie on the Cytoplasmic side of the membrane. A helical transmembrane segment spans residues Asn-358 to Val-378. Gln-379 is a topological domain (extracellular). Residues Leu-380–Thr-400 form a helical membrane-spanning segment. At Met-401–Asp-431 the chain is on the cytoplasmic side.

The protein belongs to the ammonia transporter channel (TC 1.A.11.2) family.

The protein localises to the cell membrane. Its subcellular location is the endosome membrane. It localises to the cytoplasmic vesicle. The protein resides in the phagosome membrane. Functionally, ammonium transporter that mediates the import of ammonium in prespore cells. Controls ammonium homeostasis during growth and development. Ammonium has been shown to function as a morphogen at multiple steps during the development. May function as an ammonia sensor that relays information concerning ammonia concentrations to the signaling pathway involved in the slug versus culmination choice and regulates prestalk gene expression. This is Ammonium transporter 3 (amtC) from Dictyostelium discoideum (Social amoeba).